Consider the following 339-residue polypeptide: MVREEVAGSTQTLQWKCVESRVDSKRLYYGRFILSPLRKGQADTVGIALRRALLGEIEGTCITRAKFWSVPHEYSTIAGIEESVQEILLNLKEIVLRSNLYGVRDASICVKGPRYITAQDIILPPSVEIVDTAQPIANLTEPIDFCIDLQIKRDRGYQTELRKNYQDGSYPIDAVSMPVRNVNYSIFSCGNGNEKHEILFLEIWTNGSLTPKEALYEASRNLIDLFLPFLHAEEEGTSFEENKNRFTPPLFTFQKRLTNLKKNKKGIPLNCIFIDQLELTSRTYNCLKRANIHTLLDLLSKTEEDLMRIDSFHMEDRKHIWDTLEKHLPIDLLKNKLSF.

An alpha N-terminal domain (alpha-NTD) region spans residues 1–233 (MVREEVAGST…DLFLPFLHAE (233 aa)). The tract at residues 264–339 (KKGIPLNCIF…IDLLKNKLSF (76 aa)) is alpha C-terminal domain (alpha-CTD).

It belongs to the RNA polymerase alpha chain family. In terms of assembly, in plastids the minimal PEP RNA polymerase catalytic core is composed of four subunits: alpha, beta, beta', and beta''. When a (nuclear-encoded) sigma factor is associated with the core the holoenzyme is formed, which can initiate transcription.

It is found in the plastid. It localises to the chloroplast. It catalyses the reaction RNA(n) + a ribonucleoside 5'-triphosphate = RNA(n+1) + diphosphate. In terms of biological role, DNA-dependent RNA polymerase catalyzes the transcription of DNA into RNA using the four ribonucleoside triphosphates as substrates. The polypeptide is DNA-directed RNA polymerase subunit alpha (Elymus californicus (California bottlebrush grass)).